The chain runs to 342 residues: Dihydroorotase (342 aa).

Zn(2+) contacts are provided by His13 and His15. Residues 15-17 (HLR) and Asn41 each bind substrate. Zn(2+)-binding residues include Lys99, His136, and His174. N6-carboxylysine is present on Lys99. Position 136 (His136) interacts with substrate. A substrate-binding site is contributed by Leu218. Zn(2+) is bound at residue Asp246. Asp246 is an active-site residue. 2 residues coordinate substrate: His250 and Ala262.

The protein belongs to the metallo-dependent hydrolases superfamily. DHOase family. Class II DHOase subfamily. In terms of assembly, homodimer. It depends on Zn(2+) as a cofactor.

It carries out the reaction (S)-dihydroorotate + H2O = N-carbamoyl-L-aspartate + H(+). It participates in pyrimidine metabolism; UMP biosynthesis via de novo pathway; (S)-dihydroorotate from bicarbonate: step 3/3. Catalyzes the reversible cyclization of carbamoyl aspartate to dihydroorotate. The sequence is that of Dihydroorotase from Synechocystis sp. (strain ATCC 27184 / PCC 6803 / Kazusa).